The sequence spans 472 residues: Putative F-box/LRR-repeat protein At5g54820 (472 aa).

The region spanning 6–54 (QDRLSSLPDILLIMIISFLPLKECVRTSVLSKRWRYLCLETTNLSFKES) is the F-box domain. LRR repeat units follow at residues 58–87 (NPDITDAEYSRIVAYRSFFCSVDKWVSITQ), 135–164 (NGDISYRHFMYTLPKSVYSLTTLESLKIYG), 183–208 (IGWVRLENLHSLLSKSPSLQSLSIKN), 225–250 (VIEHSDFSYMQCAFELPRIHSFKYSG), 283–308 (SSRISGEVISRIINDLRAAETLTVCP), and 338–363 (MHTKEFNGIILLLNNCPNLETLGFDI).

In Arabidopsis thaliana (Mouse-ear cress), this protein is Putative F-box/LRR-repeat protein At5g54820.